A 132-amino-acid chain; its full sequence is Small ribosomal subunit protein uS8 (132 aa).

This sequence belongs to the universal ribosomal protein uS8 family. In terms of assembly, part of the 30S ribosomal subunit. Contacts proteins S5 and S12.

One of the primary rRNA binding proteins, it binds directly to 16S rRNA central domain where it helps coordinate assembly of the platform of the 30S subunit. The chain is Small ribosomal subunit protein uS8 from Mycolicibacterium gilvum (strain PYR-GCK) (Mycobacterium gilvum (strain PYR-GCK)).